The following is a 189-amino-acid chain: 3-hydroxyanthranilate 3,4-dioxygenase (189 aa).

Arg49 provides a ligand contact to O2. 3 residues coordinate Fe cation: His53, Glu59, and His97. A substrate-binding site is contributed by Glu59. Substrate-binding residues include Arg101 and Glu112. The Fe cation site is built by Cys127, Cys130, Cys165, and Cys168.

This sequence belongs to the 3-HAO family. As to quaternary structure, homodimer. It depends on Fe(2+) as a cofactor.

The enzyme catalyses 3-hydroxyanthranilate + O2 = (2Z,4Z)-2-amino-3-carboxymuconate 6-semialdehyde. Its pathway is cofactor biosynthesis; NAD(+) biosynthesis; quinolinate from L-kynurenine: step 3/3. Catalyzes the oxidative ring opening of 3-hydroxyanthranilate to 2-amino-3-carboxymuconate semialdehyde, which spontaneously cyclizes to quinolinate. This is 3-hydroxyanthranilate 3,4-dioxygenase from Cupriavidus pinatubonensis (strain JMP 134 / LMG 1197) (Cupriavidus necator (strain JMP 134)).